Reading from the N-terminus, the 272-residue chain is Magnetosome protein MamQ 1 (272 aa).

Residues Met1–Pro46 are Cytoplasmic-facing. Residues Val47 to Met67 form a helical membrane-spanning segment. At Arg68–Lys272 the chain is on the lumenal side.

Belongs to the LemA family.

The protein localises to the magnetosome membrane. Its function is as follows. Essential for magnetosome formation. Can be used to induce magnetosome formation. The sequence is that of Magnetosome protein MamQ 1 (mamQ1) from Paramagnetospirillum magneticum (strain ATCC 700264 / AMB-1) (Magnetospirillum magneticum).